The primary structure comprises 191 residues: Cytochrome c oxidase assembly protein CtaG (191 aa).

Residues 1-9 (MALNGPQKT) are Cytoplasmic-facing. The chain crosses the membrane as a helical; Signal-anchor for type II membrane protein span at residues 10-30 (VVQLVSVVVVMGGLAWASVPF). Topologically, residues 31–191 (YDWFCRVTGF…LDAGEKTNTN (161 aa)) are periplasmic.

This sequence belongs to the COX11/CtaG family.

Its subcellular location is the cell inner membrane. Its function is as follows. Exerts its effect at some terminal stage of cytochrome c oxidase synthesis, probably by being involved in the insertion of the copper B into subunit I. This chain is Cytochrome c oxidase assembly protein CtaG, found in Ruegeria pomeroyi (strain ATCC 700808 / DSM 15171 / DSS-3) (Silicibacter pomeroyi).